We begin with the raw amino-acid sequence, 72 residues long: Large ribosomal subunit protein bL31 (72 aa).

It belongs to the bacterial ribosomal protein bL31 family. Type A subfamily. As to quaternary structure, part of the 50S ribosomal subunit.

Functionally, binds the 23S rRNA. This is Large ribosomal subunit protein bL31 from Deinococcus deserti (strain DSM 17065 / CIP 109153 / LMG 22923 / VCD115).